The sequence spans 303 residues: WD repeat-containing protein 38 (303 aa).

7 WD repeats span residues 24-63 (QHHG…LLWR), 66-105 (GHRG…CLHV), 108-147 (GHQR…RVHL), 150-189 (GHCD…PVVS), 195-233 (GHTG…LPLQ), 236-277 (GHTI…ETLK), and 279-303 (MLDV…AVTR).

This chain is WD repeat-containing protein 38 (Wdr38), found in Mus musculus (Mouse).